The chain runs to 58 residues: Potassium channel toxin alpha-KTx 16.6 (58 aa).

The first 22 residues, 1–22, serve as a signal peptide directing secretion; it reads MKILSVLLIALIICSINICSEA. 3 disulfide bridges follow: Cys-29-Cys-50, Cys-35-Cys-55, and Cys-39-Cys-57.

This sequence belongs to the short scorpion toxin superfamily. Potassium channel inhibitor family. Alpha-KTx 16 subfamily. As to expression, expressed by the venom gland.

The protein localises to the secreted. Its function is as follows. Inhibits potassium channel. This chain is Potassium channel toxin alpha-KTx 16.6, found in Buthus israelis (Israeli scorpion).